Reading from the N-terminus, the 446-residue chain is Deoxyguanosinetriphosphate triphosphohydrolase-like protein (446 aa).

A disordered region spans residues 1–28 (MSSSVWQERRHGEDKQRRNDHRSPFQRD). Basic and acidic residues predominate over residues 7–28 (QERRHGEDKQRRNDHRSPFQRD). Residues 59 to 252 (RLTHSLEVSQ…MELADDIAYA (194 aa)) form the HD domain.

The protein belongs to the dGTPase family. Type 2 subfamily.

The chain is Deoxyguanosinetriphosphate triphosphohydrolase-like protein from Shewanella sp. (strain ANA-3).